Reading from the N-terminus, the 98-residue chain is NADH-ubiquinone oxidoreductase chain 4L (98 aa).

3 helical membrane passes run 1–21, 29–49, and 59–79; these read MLPI…GVLI, TLLC…LMIT, and IPLI…ALLV.

Belongs to the complex I subunit 4L family. Core subunit of respiratory chain NADH dehydrogenase (Complex I) which is composed of 45 different subunits.

It is found in the mitochondrion inner membrane. It catalyses the reaction a ubiquinone + NADH + 5 H(+)(in) = a ubiquinol + NAD(+) + 4 H(+)(out). Core subunit of the mitochondrial membrane respiratory chain NADH dehydrogenase (Complex I) which catalyzes electron transfer from NADH through the respiratory chain, using ubiquinone as an electron acceptor. Part of the enzyme membrane arm which is embedded in the lipid bilayer and involved in proton translocation. The protein is NADH-ubiquinone oxidoreductase chain 4L (MT-ND4L) of Phascogale tapoatafa (Common wambenger).